A 95-amino-acid polypeptide reads, in one-letter code: Acylphosphatase (95 aa).

The Acylphosphatase-like domain maps to 8 to 95 (RVSARITGRV…DAFEGFRVRR (88 aa)). Residues arginine 23 and asparagine 41 contribute to the active site.

This sequence belongs to the acylphosphatase family.

The enzyme catalyses an acyl phosphate + H2O = a carboxylate + phosphate + H(+). The chain is Acylphosphatase (acyP) from Salinibacter ruber (strain DSM 13855 / M31).